A 225-amino-acid chain; its full sequence is Small ribosomal subunit protein uS3 (225 aa).

Residues 18-87 enclose the KH type-2 domain; it reads VDEYLAKQFY…NPQITVTSVE (70 aa).

The protein belongs to the universal ribosomal protein uS3 family. Part of the 30S ribosomal subunit.

Its function is as follows. Binds the lower part of the 30S subunit head. The chain is Small ribosomal subunit protein uS3 from Sulfurisphaera tokodaii (strain DSM 16993 / JCM 10545 / NBRC 100140 / 7) (Sulfolobus tokodaii).